The primary structure comprises 683 residues: DNA-directed RNA polymerase subunit beta' (683 aa).

Residues Cys69, Cys71, Cys87, and Cys90 each coordinate Zn(2+). Mg(2+) is bound by residues Asp492, Asp494, and Asp496.

The protein belongs to the RNA polymerase beta' chain family. RpoC1 subfamily. In plastids the minimal PEP RNA polymerase catalytic core is composed of four subunits: alpha, beta, beta', and beta''. When a (nuclear-encoded) sigma factor is associated with the core the holoenzyme is formed, which can initiate transcription. It depends on Mg(2+) as a cofactor. Zn(2+) is required as a cofactor.

It is found in the plastid. The protein localises to the chloroplast. It carries out the reaction RNA(n) + a ribonucleoside 5'-triphosphate = RNA(n+1) + diphosphate. DNA-dependent RNA polymerase catalyzes the transcription of DNA into RNA using the four ribonucleoside triphosphates as substrates. The sequence is that of DNA-directed RNA polymerase subunit beta' from Coffea arabica (Arabian coffee).